We begin with the raw amino-acid sequence, 105 residues long: Small ribosomal subunit protein uS10 (105 aa).

It belongs to the universal ribosomal protein uS10 family. As to quaternary structure, part of the 30S ribosomal subunit.

Its function is as follows. Involved in the binding of tRNA to the ribosomes. This is Small ribosomal subunit protein uS10 from Rickettsia prowazekii (strain Madrid E).